The chain runs to 229 residues: Putative N-acetylmannosamine-6-phosphate 2-epimerase (229 aa).

Belongs to the NanE family.

It catalyses the reaction an N-acyl-D-glucosamine 6-phosphate = an N-acyl-D-mannosamine 6-phosphate. Its pathway is amino-sugar metabolism; N-acetylneuraminate degradation; D-fructose 6-phosphate from N-acetylneuraminate: step 3/5. Functionally, converts N-acetylmannosamine-6-phosphate (ManNAc-6-P) to N-acetylglucosamine-6-phosphate (GlcNAc-6-P). The sequence is that of Putative N-acetylmannosamine-6-phosphate 2-epimerase from Haemophilus ducreyi (strain 35000HP / ATCC 700724).